We begin with the raw amino-acid sequence, 352 residues long: Adenosine deaminase (352 aa).

Alanine 2 bears the N-acetylalanine mark. Residues histidine 15 and histidine 17 each contribute to the Zn(2+) site. 2 residues coordinate substrate: histidine 17 and aspartate 19. An N6-acetyllysine modification is found at lysine 54. Glycine 184 serves as a coordination point for substrate. Histidine 214 is a binding site for Zn(2+). Glutamate 217 serves as the catalytic Proton donor. At lysine 232 the chain carries N6-acetyllysine. Aspartate 295 serves as a coordination point for Zn(2+). Residue aspartate 296 coordinates substrate.

Belongs to the metallo-dependent hydrolases superfamily. Adenosine and AMP deaminases family. Interacts with DPP4 (via extracellular domain). Interacts with PLG (via Kringle 4 domain); the interaction stimulates PLG activation when in complex with DPP4. The cofactor is Zn(2+). In terms of tissue distribution, detected in brain and liver (at protein level).

It is found in the cell membrane. It localises to the cell junction. The protein localises to the cytoplasmic vesicle lumen. Its subcellular location is the cytoplasm. The protein resides in the lysosome. It carries out the reaction adenosine + H2O + H(+) = inosine + NH4(+). The enzyme catalyses 2'-deoxyadenosine + H2O + H(+) = 2'-deoxyinosine + NH4(+). The catalysed reaction is cordycepin + H2O + H(+) = 3'-deoxyinosine + NH4(+). In terms of biological role, catalyzes the hydrolytic deamination of adenosine and 2-deoxyadenosine. Plays an important role in purine metabolism and in adenosine homeostasis. Modulates signaling by extracellular adenosine, and so contributes indirectly to cellular signaling events. Acts as a positive regulator of T-cell coactivation, by binding DPP4. Its interaction with DPP4 regulates lymphocyte-epithelial cell adhesion. Enhances dendritic cell immunogenicity by affecting dendritic cell costimulatory molecule expression and cytokines and chemokines secretion. Enhances CD4+ T-cell differentiation and proliferation. Acts as a positive modulator of adenosine receptors ADORA1 and ADORA2A, by enhancing their ligand affinity via conformational change. Stimulates plasminogen activation. Plays a role in male fertility. Plays a protective role in early postimplantation embryonic development. Also responsible for the deamination of cordycepin (3'-deoxyadenosine), a fungal natural product that shows antitumor, antibacterial, antifungal, antivirus, and immune regulation properties. This is Adenosine deaminase (Ada) from Rattus norvegicus (Rat).